A 253-amino-acid polypeptide reads, in one-letter code: Ubiquinone/menaquinone biosynthesis C-methyltransferase UbiE (253 aa).

Residues Thr-76, Asp-97, and Asn-125–Ala-126 each bind S-adenosyl-L-methionine.

This sequence belongs to the class I-like SAM-binding methyltransferase superfamily. MenG/UbiE family.

The catalysed reaction is a 2-demethylmenaquinol + S-adenosyl-L-methionine = a menaquinol + S-adenosyl-L-homocysteine + H(+). The enzyme catalyses a 2-methoxy-6-(all-trans-polyprenyl)benzene-1,4-diol + S-adenosyl-L-methionine = a 5-methoxy-2-methyl-3-(all-trans-polyprenyl)benzene-1,4-diol + S-adenosyl-L-homocysteine + H(+). It functions in the pathway quinol/quinone metabolism; menaquinone biosynthesis; menaquinol from 1,4-dihydroxy-2-naphthoate: step 2/2. The protein operates within cofactor biosynthesis; ubiquinone biosynthesis. Methyltransferase required for the conversion of demethylmenaquinol (DMKH2) to menaquinol (MKH2) and the conversion of 2-polyprenyl-6-methoxy-1,4-benzoquinol (DDMQH2) to 2-polyprenyl-3-methyl-6-methoxy-1,4-benzoquinol (DMQH2). This is Ubiquinone/menaquinone biosynthesis C-methyltransferase UbiE from Rhodopseudomonas palustris (strain HaA2).